Here is a 159-residue protein sequence, read N- to C-terminus: 2-C-methyl-D-erythritol 2,4-cyclodiphosphate synthase (159 aa).

2 residues coordinate a divalent metal cation: Asp-10 and His-12. 4-CDP-2-C-methyl-D-erythritol 2-phosphate-binding positions include 10-12 (DVH) and 36-37 (HS). An a divalent metal cation-binding site is contributed by His-44. Residues 58 to 60 (DIG), 63 to 67 (FPDTD), 102 to 108 (AQVPKMA), 134 to 137 (TTTE), Phe-141, and Arg-144 contribute to the 4-CDP-2-C-methyl-D-erythritol 2-phosphate site.

It belongs to the IspF family. As to quaternary structure, homotrimer. Requires a divalent metal cation as cofactor.

The enzyme catalyses 4-CDP-2-C-methyl-D-erythritol 2-phosphate = 2-C-methyl-D-erythritol 2,4-cyclic diphosphate + CMP. Its pathway is isoprenoid biosynthesis; isopentenyl diphosphate biosynthesis via DXP pathway; isopentenyl diphosphate from 1-deoxy-D-xylulose 5-phosphate: step 4/6. Its function is as follows. Involved in the biosynthesis of isopentenyl diphosphate (IPP) and dimethylallyl diphosphate (DMAPP), two major building blocks of isoprenoid compounds. Catalyzes the conversion of 4-diphosphocytidyl-2-C-methyl-D-erythritol 2-phosphate (CDP-ME2P) to 2-C-methyl-D-erythritol 2,4-cyclodiphosphate (ME-CPP) with a corresponding release of cytidine 5-monophosphate (CMP). This chain is 2-C-methyl-D-erythritol 2,4-cyclodiphosphate synthase, found in Shewanella woodyi (strain ATCC 51908 / MS32).